The primary structure comprises 745 residues: Ankyrin repeat and protein kinase domain-containing protein 1 (745 aa).

Residues 34-301 (EEEWHLVASG…NVAVETDMLL (268 aa)) form the Protein kinase domain. ATP is bound by residues 40–48 (VASGGFSKV) and K63. D157 serves as the catalytic Proton acceptor. ANK repeat units lie at residues 369–398 (NRVTPLHFLVAGGSLEQVRLLLSHDVDVDC), 402–431 (SGYTPLLIATQDQQPDLCALLLAHGADTNL), 435–464 (DGWAPLHFAAQNGDDHTARLLLDHGALVNA), 468–497 (EGWTPLHLAAQNNFENVARLLVSRQADLSP), 501–530 (EGKTPLHVAAYFGHIGLVKLLSGQGAELDA), 534–563 (NLRTPLHLAVERGKVRAIQHLLKCGALPDA), 567–596 (SGYSPLHIAAARGKDLIFKMLLRYGASLEL), 600–629 (QGWTPLHLATYKGHLEIIHQLAKSHVDLDA), 633–662 (MQWTPLHLAAFQGEEGVMLALLQCGANPNA), 666–695 (SGWTPLHLAVHKGTFLGITHLLEYGADIHA), and 699–728 (VGWTPAHLAALKGNTAILKVLVKAAAQVDV).

The protein belongs to the protein kinase superfamily. TKL Ser/Thr protein kinase family.

The enzyme catalyses L-seryl-[protein] + ATP = O-phospho-L-seryl-[protein] + ADP + H(+). The catalysed reaction is L-threonyl-[protein] + ATP = O-phospho-L-threonyl-[protein] + ADP + H(+). This is Ankyrin repeat and protein kinase domain-containing protein 1 (Ankk1) from Mus musculus (Mouse).